Here is a 430-residue protein sequence, read N- to C-terminus: MATSAGKLRTLYSAHSSLSSLPPSARPTLQLATLRSYATTTPHDSPIGNTSNTPPTVKRPATAFKDKLNAGPAFSDFVSGKKDEPLDPAEAYALKTALVGPPGRKKEITRLPPWLKTPIPDSSNYKRIKNDLRGLNLHTVCEEARCPNIADCWGGSSKSAATATIMLMGDTCTRGCRFCSVKTSNKPPPLDPHEPDNTAEALSRWGLGYVVLTTVDRDDLADGGARHCAETVMKIKQKAPNILVECLTGDYAGDLDMVALVANSGLDVFAHNVETVEALTPFVRDRRASFQQSLRVLKAAKAAKPELITKTSLMLGLGETEAQLWDALRALRAINVDVVTFGQYMRPTKRHMAVHEYVRPDVFDLWKERALEMGFLYCASGPLVRSSYKAGEAFIENVLKKRKGGNAGSVNEKVTTSENVKKLVAGEAMR.

Residues 1 to 37 constitute a mitochondrion transit peptide; that stretch reads MATSAGKLRTLYSAHSSLSSLPPSARPTLQLATLRSY. Polar residues predominate over residues 39–55; sequence TTTPHDSPIGNTSNTPP. Positions 39–59 are disordered; it reads TTTPHDSPIGNTSNTPPTVKR. Residues C141, C146, C152, C172, C176, C179, and S387 each contribute to the [4Fe-4S] cluster site. Positions 155–376 constitute a Radical SAM core domain; it reads GSSKSAATAT…KERALEMGFL (222 aa).

Belongs to the radical SAM superfamily. Lipoyl synthase family. Requires [4Fe-4S] cluster as cofactor.

The protein localises to the mitochondrion. The catalysed reaction is [[Fe-S] cluster scaffold protein carrying a second [4Fe-4S](2+) cluster] + N(6)-octanoyl-L-lysyl-[protein] + 2 oxidized [2Fe-2S]-[ferredoxin] + 2 S-adenosyl-L-methionine + 4 H(+) = [[Fe-S] cluster scaffold protein] + N(6)-[(R)-dihydrolipoyl]-L-lysyl-[protein] + 4 Fe(3+) + 2 hydrogen sulfide + 2 5'-deoxyadenosine + 2 L-methionine + 2 reduced [2Fe-2S]-[ferredoxin]. It functions in the pathway protein modification; protein lipoylation via endogenous pathway; protein N(6)-(lipoyl)lysine from octanoyl-[acyl-carrier-protein]: step 2/2. Its function is as follows. Catalyzes the radical-mediated insertion of two sulfur atoms into the C-6 and C-8 positions of the octanoyl moiety bound to the lipoyl domains of lipoate-dependent enzymes, thereby converting the octanoylated domains into lipoylated derivatives. The protein is Lipoyl synthase, mitochondrial of Ajellomyces capsulatus (strain H143) (Darling's disease fungus).